We begin with the raw amino-acid sequence, 107 residues long: DNA-directed RNA polymerase subunit omega (107 aa).

It belongs to the RNA polymerase subunit omega family. In terms of assembly, the RNAP catalytic core consists of 2 alpha, 1 beta, 1 beta' and 1 omega subunit. When a sigma factor is associated with the core the holoenzyme is formed, which can initiate transcription.

The catalysed reaction is RNA(n) + a ribonucleoside 5'-triphosphate = RNA(n+1) + diphosphate. In terms of biological role, promotes RNA polymerase assembly. Latches the N- and C-terminal regions of the beta' subunit thereby facilitating its interaction with the beta and alpha subunits. The polypeptide is DNA-directed RNA polymerase subunit omega (Oenococcus oeni (strain ATCC BAA-331 / PSU-1)).